An 82-amino-acid polypeptide reads, in one-letter code: Large ribosomal subunit protein bL31B (82 aa).

It belongs to the bacterial ribosomal protein bL31 family. Type B subfamily. In terms of assembly, part of the 50S ribosomal subunit.

This chain is Large ribosomal subunit protein bL31B, found in Bacillus velezensis (strain DSM 23117 / BGSC 10A6 / LMG 26770 / FZB42) (Bacillus amyloliquefaciens subsp. plantarum).